We begin with the raw amino-acid sequence, 315 residues long: Glutathione synthetase (315 aa).

An ATP-grasp domain is found at 125–310; that stretch reads KLFTAWFSDL…ITGMLMDAIE (186 aa). Arg256 is a glycosylation site (N-beta-linked (GlcNAc) arginine). Residues Glu281 and Asn283 each coordinate Mg(2+).

This sequence belongs to the prokaryotic GSH synthase family. The cofactor is Mg(2+). Mn(2+) serves as cofactor. Glycosylation at Arg-256 by NleB enhances the glutathione synthetase activity, leading to an increase in glutathione production. Glycosylation may promote C.rodentium survival in oxidative stress conditions.

It carries out the reaction gamma-L-glutamyl-L-cysteine + glycine + ATP = glutathione + ADP + phosphate + H(+). It functions in the pathway sulfur metabolism; glutathione biosynthesis; glutathione from L-cysteine and L-glutamate: step 2/2. This Citrobacter rodentium protein is Glutathione synthetase.